Reading from the N-terminus, the 403-residue chain is Argininosuccinate synthase (403 aa).

10 to 18 contributes to the ATP binding site; sequence AYSGGLDTS. Residues Tyr-88 and Ser-93 each coordinate L-citrulline. Gly-118 is an ATP binding site. Residues Thr-120, Asn-124, and Asp-125 each contribute to the L-aspartate site. Residue Asn-124 coordinates L-citrulline. L-citrulline contacts are provided by Arg-128, Ser-177, Ser-186, Glu-263, and Tyr-275.

It belongs to the argininosuccinate synthase family. Type 1 subfamily. In terms of assembly, homotetramer.

The protein resides in the cytoplasm. The catalysed reaction is L-citrulline + L-aspartate + ATP = 2-(N(omega)-L-arginino)succinate + AMP + diphosphate + H(+). Its pathway is amino-acid biosynthesis; L-arginine biosynthesis; L-arginine from L-ornithine and carbamoyl phosphate: step 2/3. This Clostridium perfringens (strain ATCC 13124 / DSM 756 / JCM 1290 / NCIMB 6125 / NCTC 8237 / Type A) protein is Argininosuccinate synthase.